The sequence spans 385 residues: MIATPVKIESVETILVDVPTIRPHRLSVATMNCQTLVLVRIRCADGVVGVGEGTTIGGLAYGEESPESIKVNIDTYFAPLLKGLDATRPGAAMATLRGLFQGNRFARSAVETALFDAQAQRLGVPLSELFGGRIRDSVDVAWTLASGDTTRDIDEAERVFEAKRHRVFKLKIGSRALADDVAHVVAIQKALQGRGEVRVDVNQAWTESEAIWAGKRFADASVALIEQPIAAENRAGLKRLTDLAQVPIMADEALHGPADAFALASARAADVFAVKIAQSGGLSGAANVAAIALAANIDLYGGTMLEGAVGTIASAQLFSTFGELKWGTELFGPLLLTEEILTEPLRYENFVLHLPQGPGLGITLDWDKIDRLRRDTRKGASITMN.

K171 is a catalytic residue. Mn(2+) contacts are provided by E226 and D251.

This sequence belongs to the mandelate racemase/muconate lactonizing enzyme family. Homooctamer. Mn(2+) is required as a cofactor.

The enzyme catalyses (S)-muconolactone = cis,cis-muconate + H(+). It participates in aromatic compound metabolism; beta-ketoadipate pathway; 5-oxo-4,5-dihydro-2-furylacetate from catechol: step 2/3. Its function is as follows. Catalyzes a syn cycloisomerization. In Acinetobacter lwoffii, this protein is Muconate cycloisomerase 1-2 (catB2).